The following is a 701-amino-acid chain: Elongation factor G (701 aa).

The tr-type G domain maps to 8–290; it reads ERYRNIGISA…AVVDYLPAPT (283 aa). Residues 17 to 24, 88 to 92, and 142 to 145 each bind GTP; these read AHIDAGKT, DTPGH, and NKMD.

The protein belongs to the TRAFAC class translation factor GTPase superfamily. Classic translation factor GTPase family. EF-G/EF-2 subfamily.

The protein localises to the cytoplasm. In terms of biological role, catalyzes the GTP-dependent ribosomal translocation step during translation elongation. During this step, the ribosome changes from the pre-translocational (PRE) to the post-translocational (POST) state as the newly formed A-site-bound peptidyl-tRNA and P-site-bound deacylated tRNA move to the P and E sites, respectively. Catalyzes the coordinated movement of the two tRNA molecules, the mRNA and conformational changes in the ribosome. The polypeptide is Elongation factor G (Aeromonas hydrophila subsp. hydrophila (strain ATCC 7966 / DSM 30187 / BCRC 13018 / CCUG 14551 / JCM 1027 / KCTC 2358 / NCIMB 9240 / NCTC 8049)).